The primary structure comprises 874 residues: Alanine--tRNA ligase (874 aa).

Histidine 564, histidine 568, cysteine 665, and histidine 669 together coordinate Zn(2+).

It belongs to the class-II aminoacyl-tRNA synthetase family. It depends on Zn(2+) as a cofactor.

It localises to the cytoplasm. The enzyme catalyses tRNA(Ala) + L-alanine + ATP = L-alanyl-tRNA(Ala) + AMP + diphosphate. Functionally, catalyzes the attachment of alanine to tRNA(Ala) in a two-step reaction: alanine is first activated by ATP to form Ala-AMP and then transferred to the acceptor end of tRNA(Ala). Also edits incorrectly charged Ser-tRNA(Ala) and Gly-tRNA(Ala) via its editing domain. The protein is Alanine--tRNA ligase of Cupriavidus necator (strain ATCC 17699 / DSM 428 / KCTC 22496 / NCIMB 10442 / H16 / Stanier 337) (Ralstonia eutropha).